Consider the following 735-residue polypeptide: F-box and leucine-rich repeat protein 13 (735 aa).

The F-box domain occupies K152–I198. LRR repeat units follow at residues G230–D254, C255–N280, T281–Y305, C306–G333, C334–D359, M360–G385, A386–R406, N410–D435, C436–N460, C461–N488, C489–N514, C515–S538, G539–E563, C564–Y589, C590–G615, C616–G641, and C642–Y667. The span at K682–D692 shows a compositional bias: polar residues. The segment at K682–G703 is disordered.

It belongs to the DRC6 family. Component of the nexin-dynein regulatory complex (N-DRC). Directly interacts with SKP1 and CUL1. Interacts with TCTE1/DRC5.

It is found in the cytoplasm. Its subcellular location is the cytoskeleton. The protein resides in the flagellum axoneme. It localises to the microtubule organizing center. The protein localises to the centrosome. Substrate-recognition component of the SCF (SKP1-CUL1-F-box protein)-type E3 ubiquitin ligase complex. Component of the nexin-dynein regulatory complex (N-DRC), a key regulator of ciliary/flagellar motility which maintains the alignment and integrity of the distal axoneme and regulates microtubule sliding in motile axonemes. Specifically targets CEP192 isoform 3 for ubiquitin-mediated proteolysis and thereby acts as a regulator of microtubule nucleation activity. This Homo sapiens (Human) protein is F-box and leucine-rich repeat protein 13 (FBXL13).